The sequence spans 142 residues: Large ribosomal subunit protein bL17 (142 aa).

This sequence belongs to the bacterial ribosomal protein bL17 family. In terms of assembly, part of the 50S ribosomal subunit. Contacts protein L32.

The polypeptide is Large ribosomal subunit protein bL17 (Chlamydia abortus (strain DSM 27085 / S26/3) (Chlamydophila abortus)).